The primary structure comprises 149 residues: Transcriptional regulator MraZ (149 aa).

2 consecutive SpoVT-AbrB domains span residues 6 to 52 and 81 to 124; these read RSHR…PLPD and AELM…DQGR.

This sequence belongs to the MraZ family. As to quaternary structure, forms oligomers.

The protein localises to the cytoplasm. It localises to the nucleoid. This is Transcriptional regulator MraZ from Nitratidesulfovibrio vulgaris (strain DSM 19637 / Miyazaki F) (Desulfovibrio vulgaris).